Here is a 251-residue protein sequence, read N- to C-terminus: 3-dehydroquinate dehydratase (251 aa).

Residues Glu47 to Arg49 and Arg83 contribute to the 3-dehydroquinate site. His144 (proton donor/acceptor) is an active-site residue. Residue Lys171 is the Schiff-base intermediate with substrate of the active site. The 3-dehydroquinate site is built by Arg214, Ser233, and Gln237.

Belongs to the type-I 3-dehydroquinase family. In terms of assembly, homodimer.

The catalysed reaction is 3-dehydroquinate = 3-dehydroshikimate + H2O. It functions in the pathway metabolic intermediate biosynthesis; chorismate biosynthesis; chorismate from D-erythrose 4-phosphate and phosphoenolpyruvate: step 3/7. Involved in the third step of the chorismate pathway, which leads to the biosynthesis of aromatic amino acids. Catalyzes the cis-dehydration of 3-dehydroquinate (DHQ) and introduces the first double bond of the aromatic ring to yield 3-dehydroshikimate. This is 3-dehydroquinate dehydratase from Klebsiella pneumoniae (strain 342).